Reading from the N-terminus, the 213-residue chain is Pyrrolidone-carboxylate peptidase (213 aa).

Catalysis depends on residues E80, C143, and H165.

This sequence belongs to the peptidase C15 family. Homotetramer.

The protein resides in the cytoplasm. It carries out the reaction Release of an N-terminal pyroglutamyl group from a polypeptide, the second amino acid generally not being Pro.. Removes 5-oxoproline from various penultimate amino acid residues except L-proline. The chain is Pyrrolidone-carboxylate peptidase from Erwinia tasmaniensis (strain DSM 17950 / CFBP 7177 / CIP 109463 / NCPPB 4357 / Et1/99).